The sequence spans 81 residues: Photosystem I iron-sulfur center (81 aa).

4Fe-4S ferredoxin-type domains follow at residues 2–31 and 39–68; these read AHSV…MVPW and IASA…VRVY. [4Fe-4S] cluster-binding residues include cysteine 11, cysteine 14, cysteine 17, cysteine 21, cysteine 48, cysteine 51, cysteine 54, and cysteine 58.

The eukaryotic PSI reaction center is composed of at least 11 subunits. The cofactor is [4Fe-4S] cluster.

It is found in the plastid. It localises to the chloroplast thylakoid membrane. It carries out the reaction reduced [plastocyanin] + hnu + oxidized [2Fe-2S]-[ferredoxin] = oxidized [plastocyanin] + reduced [2Fe-2S]-[ferredoxin]. Apoprotein for the two 4Fe-4S centers FA and FB of photosystem I (PSI); essential for photochemical activity. FB is the terminal electron acceptor of PSI, donating electrons to ferredoxin. The C-terminus interacts with PsaA/B/D and helps assemble the protein into the PSI complex. Required for binding of PsaD and PsaE to PSI. PSI is a plastocyanin-ferredoxin oxidoreductase, converting photonic excitation into a charge separation, which transfers an electron from the donor P700 chlorophyll pair to the spectroscopically characterized acceptors A0, A1, FX, FA and FB in turn. In Physcomitrium patens (Spreading-leaved earth moss), this protein is Photosystem I iron-sulfur center.